A 219-amino-acid polypeptide reads, in one-letter code: Chalcone--flavanone isomerase (219 aa).

The substrate site is built by Thr-50, Asn-115, and Ser-188.

The protein belongs to the chalcone isomerase family.

The enzyme catalyses a chalcone = a flavanone.. It functions in the pathway secondary metabolite biosynthesis; flavonoid biosynthesis. Functionally, catalyzes the intramolecular cyclization of bicyclic chalcones into tricyclic (S)-flavanones. Responsible for the isomerization of 4,2',4',6'-tetrahydroxychalcone (also termed chalcone) into naringenin. The polypeptide is Chalcone--flavanone isomerase (CHI) (Clitoria ternatea (Butterfly pea)).